The chain runs to 362 residues: Tyrosyl-DNA phosphodiesterase 2 (362 aa).

The residue at position 1 (methionine 1) is an N-acetylmethionine. The tract at residues 1–20 is disordered; that stretch reads MELGSCLEGGREAAEEEGEP. Residues lysine 23 and lysine 82 each participate in a glycyl lysine isopeptide (Lys-Gly) (interchain with G-Cter in SUMO2) cross-link. Residues 87–109 form a disordered region; that stretch reads LTNEETTDSTTSKISPSEDTQQE. Residues threonine 88 and threonine 92 each carry the phosphothreonine; by ACVR1B modification. The segment covering 94-109 has biased composition (polar residues); it reads DSTTSKISPSEDTQQE. Serine 95 bears the Phosphoserine mark. The interval 120–124 is interaction with 5' end of substrate DNA; that stretch reads NIDGL. Residues aspartate 122 and glutamate 152 each coordinate Mg(2+). Residues 226–231 are interaction with 5' end of substrate DNA; it reads HLESTR. Aspartate 262 functions as the Proton donor/acceptor in the catalytic mechanism. The interval 264-266 is interaction with 5' end of substrate DNA; the sequence is NLR.

The protein belongs to the CCR4/nocturin family. As to quaternary structure, interacts with TRAF2, TRAF3, TRAF5, TRAF6, TNFRSF8/CD30, TNFRSF5/CD40, TNFRSF1B/TNF-R75, ETS1, ETS2, FLI1, SMAD3 and ACVR1B/ALK4. In terms of assembly, (Microbial infection) Interacts with Hantaan hantavirus nucleoprotein. (Microbial infection) Interacts with Seoul hantavirus nucleoprotein. It depends on Mg(2+) as a cofactor. The cofactor is Mn(2+). Ubiquitinated by TRAF6. Widely expressed. Highly expressed in various brain regions, including the frontal and occipital lobes, the hippocampus, the striatum and the cerebellum.

It is found in the nucleus. The protein resides in the PML body. It localises to the nucleolus. Its subcellular location is the cytoplasm. Functionally, DNA repair enzyme that can remove a variety of covalent adducts from DNA through hydrolysis of a 5'-phosphodiester bond, giving rise to DNA with a free 5' phosphate. Catalyzes the hydrolysis of dead-end complexes between DNA and the topoisomerase 2 (TOP2) active site tyrosine residue. The 5'-tyrosyl DNA phosphodiesterase activity can enable the repair of TOP2-induced DNA double-strand breaks/DSBs without the need for nuclease activity, creating a 'clean' DSB with 5'-phosphate termini that are ready for ligation. Thereby, protects the transcription of many genes involved in neurological development and maintenance from the abortive activity of TOP2. Hydrolyzes 5'-phosphoglycolates on protruding 5' ends on DSBs due to DNA damage by radiation and free radicals. Has preference for single-stranded DNA or duplex DNA with a 4 base pair overhang as substrate. Acts as a regulator of ribosome biogenesis following stress. Also has 3'-tyrosyl DNA phosphodiesterase activity, but less efficiently and much slower than TDP1. Constitutes the major if not only 5'-tyrosyl-DNA phosphodiesterase in cells. Also acts as an adapter by participating in the specific activation of MAP3K7/TAK1 in response to TGF-beta: associates with components of the TGF-beta receptor-TRAF6-TAK1 signaling module and promotes their ubiquitination dependent complex formation. Involved in non-canonical TGF-beta induced signaling routes. May also act as a negative regulator of ETS1 and may inhibit NF-kappa-B activation. Its function is as follows. (Microbial infection) Used by picornaviruses to remove the small polypeptide, VPg (virus Protein genome-linked, the primer for viral RNA synthesis), from the genomic RNA of the virus. Acts as a 5'-tyrosyl RNA phosphodiesterase and cleaves the covalent VPg-Tyr-RNA bond. This cleavage would play a role in viral replication and occur in viral replication vesicles, but would not act on viral mRNA. The sequence is that of Tyrosyl-DNA phosphodiesterase 2 from Homo sapiens (Human).